The chain runs to 465 residues: 3-isopropylmalate dehydratase large subunit (465 aa).

[4Fe-4S] cluster is bound by residues Cys347, Cys407, and Cys410. The tract at residues 416–443 is disordered; it reads DTLRPGERSASTSNRNFEGRQGPGGRTH.

This sequence belongs to the aconitase/IPM isomerase family. LeuC type 1 subfamily. In terms of assembly, heterodimer of LeuC and LeuD. [4Fe-4S] cluster serves as cofactor.

The enzyme catalyses (2R,3S)-3-isopropylmalate = (2S)-2-isopropylmalate. The protein operates within amino-acid biosynthesis; L-leucine biosynthesis; L-leucine from 3-methyl-2-oxobutanoate: step 2/4. Functionally, catalyzes the isomerization between 2-isopropylmalate and 3-isopropylmalate, via the formation of 2-isopropylmaleate. The chain is 3-isopropylmalate dehydratase large subunit from Frankia alni (strain DSM 45986 / CECT 9034 / ACN14a).